Consider the following 243-residue polypeptide: Derlin-1.1 (243 aa).

Residues 1–20 (MSSPAEYYKSLPPISKAYGT) are Cytoplasmic-facing. Residues 21–41 (LCFFTTVLVQLQILHPLFLYL) traverse the membrane as a helical segment. The Lumenal segment spans residues 42–55 (DYPLVFKKFEIWRL). A helical membrane pass occupies residues 56 to 76 (LTSFFFLAPFSMKFGIRLLMI). Residues 77–94 (ARYGVMLEKGAFDKRTAD) are Cytoplasmic-facing. Residues 95–115 (FLWMMIFGAISLLVLSIIPLF) traverse the membrane as a helical segment. Residues 116 to 157 (NSFFLGIPMVSMLLYVWSRENPNAQINIYGLVQLRSFYLPWA) lie on the Lumenal side of the membrane. The helical transmembrane segment at 158–178 (MLLLDVIFGSSLMPGLLGIMV) threads the bilayer. Topologically, residues 179–243 (GHLYYFFAVL…FRGRSYRLNQ (65 aa)) are cytoplasmic. The disordered stretch occupies residues 219–243 (SPVRPPANGNSGSGVFRGRSYRLNQ).

The protein belongs to the derlin family. Expressed in roots, stalks, leaves, immature ears, embryo and endosperm.

The protein localises to the endoplasmic reticulum membrane. Functionally, may be involved in the degradation process of specific misfolded endoplasmic reticulum (ER) luminal proteins. The sequence is that of Derlin-1.1 (DER1.1) from Zea mays (Maize).